A 303-amino-acid polypeptide reads, in one-letter code: N-acetyl-D-glucosamine kinase (303 aa).

ATP is bound by residues Gly4 to Lys11 and Gly133 to Phe140. Zn(2+) is bound by residues His157, Cys177, Cys179, and Cys184.

This sequence belongs to the ROK (NagC/XylR) family. NagK subfamily.

It catalyses the reaction N-acetyl-D-glucosamine + ATP = N-acetyl-D-glucosamine 6-phosphate + ADP + H(+). It participates in cell wall biogenesis; peptidoglycan recycling. Its function is as follows. Catalyzes the phosphorylation of N-acetyl-D-glucosamine (GlcNAc) derived from cell-wall degradation, yielding GlcNAc-6-P. The protein is N-acetyl-D-glucosamine kinase of Photobacterium profundum (strain SS9).